The sequence spans 448 residues: MAPRRAACLLPLLVAVASAGLGGYFGTKSRYEEVNPHLAEDPLSLGPHAAASRLPAACAPLQLRAVLRHGTRYPTAGQIRRLAELHGRLRRAAAPSCPAAAALAAWPMWYEESLDRLAPRGRRDMEHLARRLAARFPALFAARRRLALASSSKHRCLQSGAAFRRGLGPSLSLGADETEIEVNDALMRFFDHCDKFVAFVEDNDTAMYQVNAFKEGPEMRKVLEKVASALCLPASELNADLVQVAFLTCSYELAIKNVTSPWCSLFSEEDAKVLEYLNDLKQYWKRGYGYDINSRSSCILFQDIFQQLDKAVDESRSSKPISSPLIVQVGHAETLQPLLALMGYFKDAEPLQANNYIRQAHRKFRSGRIVPYAANLVFVLYHCEQKTSKEEYQVQMLLNEKPMLFHHSNETISTYADLKSYYKDILQNCHFEEVCELPKVNGTVADEL.

The first 19 residues, 1–19, serve as a signal peptide directing secretion; that stretch reads MAPRRAACLLPLLVAVASA. His69 is an active-site residue. Residues Asn203, Asn257, Asn409, and Asn441 are each glycosylated (N-linked (GlcNAc...) asparagine). Positions 445–448 match the Prevents secretion from ER motif; that stretch reads ADEL.

Belongs to the histidine acid phosphatase family. MINPP1 subfamily. Post-translationally, N-glycosylated. In terms of tissue distribution, present in growth plate chondrocytes but not detectable in articular chondrocytes (at protein level). Spatially restricted to chondrocytes in the lower portion of the proliferative zone and the upper portion of the hypertrophic zone in the growth plate of long bones (at protein level). Weakly expressed in kidney, liver, lung, skin and spleen, and not detected in brain, heart and muscle.

Its subcellular location is the endoplasmic reticulum lumen. The protein localises to the secreted. It localises to the cell membrane. The enzyme catalyses 1D-myo-inositol hexakisphosphate + H2O = 1D-myo-inositol 1,2,4,5,6-pentakisphosphate + phosphate. The catalysed reaction is 1D-myo-inositol 1,2,4,5,6-pentakisphosphate + H2O = 1D-myo-inositol 1,2,5,6-tetrakisphosphate + phosphate. It carries out the reaction 1D-myo-inositol 1,2,5,6-tetrakisphosphate + H2O = 1D-myo-inositol 1,2,6-trisphosphate + phosphate. It catalyses the reaction 1D-myo-inositol 1,2,6-trisphosphate + H2O = 1D-myo-inositol 1,2-bisphosphate + phosphate. The enzyme catalyses 1D-myo-inositol 1,2-bisphosphate + H2O = 1D-myo-inositol 2-phosphate + phosphate. The catalysed reaction is 1D-myo-inositol hexakisphosphate + H2O = 1D-myo-inositol 1,2,3,5,6-pentakisphosphate + phosphate. It carries out the reaction 1D-myo-inositol 1,2,3,5,6-pentakisphosphate + H2O = 1D-myo-inositol 1,2,3,6-tetrakisphosphate + phosphate. It catalyses the reaction 1D-myo-inositol 1,2,3,6-tetrakisphosphate + H2O = 1D-myo-inositol 1,2,3-trisphosphate + phosphate. The enzyme catalyses 1D-myo-inositol 1,2,3-trisphosphate + H2O = 1D-myo-inositol 2,3-bisphosphate + phosphate. The catalysed reaction is 1D-myo-inositol 2,3-bisphosphate + H2O = 1D-myo-inositol 2-phosphate + phosphate. It carries out the reaction 1D-myo-inositol 1,3,4,5,6-pentakisphosphate + H2O = 1D-myo-inositol 1,4,5,6-tetrakisphosphate + phosphate. It catalyses the reaction 1D-myo-inositol 1,4,5,6-tetrakisphosphate + H2O = 1D-myo-inositol 1,4,5-trisphosphate + phosphate. The enzyme catalyses (2R)-2,3-bisphosphoglycerate + H2O = (2R)-2-phosphoglycerate + phosphate. Functionally, multiple inositol polyphosphate phosphatase that hydrolyzes 1D-myo-inositol 1,3,4,5,6-pentakisphosphate (InsP5[2OH]) and 1D-myo-inositol hexakisphosphate (InsP6) to a range of less phosphorylated inositol phosphates. This regulates the availability of these various small molecule second messengers and metal chelators which control many aspects of cell physiology. Has a weak in vitro activity towards 1D-myo-inositol 1,4,5-trisphosphate which is unlikely to be physiologically relevant. By regulating intracellular inositol polyphosphates pools, which act as metal chelators, it may control the availability of intracellular calcium and iron, which are important for proper neuronal development and homeostasis. May have a dual substrate specificity, and function as a 2,3-bisphosphoglycerate 3-phosphatase hydrolyzing 2,3-bisphosphoglycerate to 2-phosphoglycerate. 2,3-bisphosphoglycerate (BPG) is formed as part of the Rapoport-Luebering glycolytic bypass and is a regulator of systemic oxygen homeostasis as the major allosteric effector of hemoglobin. This is Multiple inositol polyphosphate phosphatase 1 (MINPP1) from Gallus gallus (Chicken).